A 222-amino-acid polypeptide reads, in one-letter code: N-(5'-phosphoribosyl)anthranilate isomerase (222 aa).

It belongs to the TrpF family.

It catalyses the reaction N-(5-phospho-beta-D-ribosyl)anthranilate = 1-(2-carboxyphenylamino)-1-deoxy-D-ribulose 5-phosphate. It participates in amino-acid biosynthesis; L-tryptophan biosynthesis; L-tryptophan from chorismate: step 3/5. The polypeptide is N-(5'-phosphoribosyl)anthranilate isomerase (Rhizobium etli (strain ATCC 51251 / DSM 11541 / JCM 21823 / NBRC 15573 / CFN 42)).